A 640-amino-acid chain; its full sequence is Glutamyl-tRNA(Gln) amidotransferase subunit E (640 aa).

It belongs to the GatB/GatE family. GatE subfamily. As to quaternary structure, heterodimer of GatD and GatE.

The enzyme catalyses L-glutamyl-tRNA(Gln) + L-glutamine + ATP + H2O = L-glutaminyl-tRNA(Gln) + L-glutamate + ADP + phosphate + H(+). In terms of biological role, allows the formation of correctly charged Gln-tRNA(Gln) through the transamidation of misacylated Glu-tRNA(Gln) in organisms which lack glutaminyl-tRNA synthetase. The reaction takes place in the presence of glutamine and ATP through an activated gamma-phospho-Glu-tRNA(Gln). The GatDE system is specific for glutamate and does not act on aspartate. This Methanopyrus kandleri (strain AV19 / DSM 6324 / JCM 9639 / NBRC 100938) protein is Glutamyl-tRNA(Gln) amidotransferase subunit E.